A 143-amino-acid chain; its full sequence is High mobility group protein B (143 aa).

The interval 1-22 (MSKAASQYATLEDLPSKPKRPQ) is disordered. The segment at residues 18 to 86 (PKRPQTGFFI…TYDKQNDQWK (69 aa)) is a DNA-binding region (HMG box). Blocked amino end (Ala) is present on Ala-70. 2 stretches are compositionally biased toward basic and acidic residues: residues 100 to 120 (AKKA…ELEK) and 131 to 143 (AKKD…AKKK). A disordered region spans residues 100-143 (AKKALKEKTKKSKAAEKELEKSKKKAPAAAPAKKDDKKAPAKKK).

The protein localises to the nucleus. The protein resides in the chromosome. The sequence is that of High mobility group protein B from Tetrahymena thermophila.